The following is a 609-amino-acid chain: Frizzled and smoothened-like protein E (609 aa).

A signal peptide spans 1–20 (MEMIRIFLIYLILKIIIING). Residues 21-259 (ENNEYSKGYG…QWKRVYDMAK (239 aa)) are Extracellular-facing. Positions 35–192 (FPGSKCLNYV…GLYKVPCIDP (158 aa)) constitute an FZ domain. Disulfide bonds link cysteine 40–cysteine 118, cysteine 53–cysteine 111, cysteine 100–cysteine 149, and cysteine 138–cysteine 189. Asparagine 75, asparagine 130, asparagine 172, asparagine 198, asparagine 217, and asparagine 245 each carry an N-linked (GlcNAc...) asparagine glycan. Residues 260–280 (TLSSISFICACYNILTFGILN) form a helical membrane-spanning segment. At 281-288 (RKRKSKYN) the chain is on the cytoplasmic side. The chain crosses the membrane as a helical span at residues 289–309 (ICITLMSTSIALVYLTDIIKF). At 310 to 337 (GYGIEEFLCPEPGRSAVQNDAACGITGA) the chain is on the extracellular side. A helical transmembrane segment spans residues 338-358 (MFHFGITYCCCWAMTMSIVLF). Residues 359 to 365 (CSVKRIK) are Cytoplasmic-facing. A helical transmembrane segment spans residues 366–386 (LFYFRHFMIGNTIFTIITTVI). Topologically, residues 387 to 408 (LLSAKKMVAGTGYIECWVRERW) are extracellular. The helical transmembrane segment at 409-429 (FVITLFWLPCGIGLSIGIFCI) threads the bilayer. Topologically, residues 430–457 (GGVIHEIYNISKKVNIRESEFILRQIKP) are cytoplasmic. A helical membrane pass occupies residues 458-478 (FSLVFSVAGSFLYLFIFFFDV). The Extracellular segment spans residues 479–511 (ERKIDSYKAAVADYVLCLLSGGSEETCFTTGPN). A helical transmembrane segment spans residues 512 to 532 (YASFFIFYFFIRVFGVLFFSI). Topologically, residues 533 to 609 (YGTSRVARDI…DSKSIELEKK (77 aa)) are cytoplasmic. The span at 559-570 (ESGISRNNSRTD) shows a compositional bias: polar residues. The segment at 559–609 (ESGISRNNSRTDISFGKNNNSKNSNNSKNSNNSKNSNNSDNDSKSIELEKK) is disordered. The span at 575 to 598 (KNNNSKNSNNSKNSNNSKNSNNSD) shows a compositional bias: low complexity. The span at 599-609 (NDSKSIELEKK) shows a compositional bias: basic and acidic residues.

This sequence belongs to the G-protein coupled receptor Fz/Smo family.

It localises to the membrane. This chain is Frizzled and smoothened-like protein E (fslE), found in Dictyostelium discoideum (Social amoeba).